The following is a 338-amino-acid chain: Ferrochelatase (338 aa).

Residues histidine 189 and glutamate 294 each coordinate Fe cation.

It belongs to the ferrochelatase family.

The protein resides in the cytoplasm. It catalyses the reaction heme b + 2 H(+) = protoporphyrin IX + Fe(2+). Its pathway is porphyrin-containing compound metabolism; protoheme biosynthesis; protoheme from protoporphyrin-IX: step 1/1. Functionally, catalyzes the ferrous insertion into protoporphyrin IX. The sequence is that of Ferrochelatase from Pseudomonas putida (strain ATCC 47054 / DSM 6125 / CFBP 8728 / NCIMB 11950 / KT2440).